The primary structure comprises 398 residues: S-adenosylmethionine synthase (398 aa).

H16 provides a ligand contact to ATP. Position 18 (D18) interacts with Mg(2+). E44 is a binding site for K(+). L-methionine-binding residues include E57 and Q100. A flexible loop region spans residues 100-110; that stretch reads QSPDIAQGVNE. ATP-binding positions include 175 to 177, 242 to 243, D251, 257 to 258, A274, and K278; these read DAK, RF, and RK. Residue D251 participates in L-methionine binding. L-methionine is bound at residue K282.

It belongs to the AdoMet synthase family. In terms of assembly, homotetramer; dimer of dimers. Mg(2+) is required as a cofactor. K(+) serves as cofactor.

Its subcellular location is the cytoplasm. It carries out the reaction L-methionine + ATP + H2O = S-adenosyl-L-methionine + phosphate + diphosphate. The protein operates within amino-acid biosynthesis; S-adenosyl-L-methionine biosynthesis; S-adenosyl-L-methionine from L-methionine: step 1/1. In terms of biological role, catalyzes the formation of S-adenosylmethionine (AdoMet) from methionine and ATP. The overall synthetic reaction is composed of two sequential steps, AdoMet formation and the subsequent tripolyphosphate hydrolysis which occurs prior to release of AdoMet from the enzyme. The polypeptide is S-adenosylmethionine synthase (Streptococcus agalactiae serotype Ia (strain ATCC 27591 / A909 / CDC SS700)).